The chain runs to 131 residues: Holo-[acyl-carrier-protein] synthase (131 aa).

2 residues coordinate Mg(2+): aspartate 8 and glutamate 62.

This sequence belongs to the P-Pant transferase superfamily. AcpS family. The cofactor is Mg(2+).

The protein resides in the cytoplasm. The catalysed reaction is apo-[ACP] + CoA = holo-[ACP] + adenosine 3',5'-bisphosphate + H(+). Its function is as follows. Transfers the 4'-phosphopantetheine moiety from coenzyme A to a Ser of acyl-carrier-protein. In Delftia acidovorans (strain DSM 14801 / SPH-1), this protein is Holo-[acyl-carrier-protein] synthase.